A 163-amino-acid polypeptide reads, in one-letter code: Putative MucR family transcriptional regulatory protein RA0938 (163 aa).

Belongs to the ros/MucR family.

This Rhizobium meliloti (strain 1021) (Ensifer meliloti) protein is Putative MucR family transcriptional regulatory protein RA0938.